We begin with the raw amino-acid sequence, 350 residues long: Serine-threonine kinase receptor-associated protein (350 aa).

WD repeat units lie at residues 12–56, 57–96, 98–137, 141–179, 180–212, 221–262, and 263–302; these read GHTR…GTFL, GHKGAVWGATLNKDATKAATAAADFTAKVWDAVSGDELMT, AHKHIVKTVDFTQDSNYLLTGGQDKLLRIYDLNKPEAEPK, GHTSGIKKALWCSEDKQILSADDKTVRLWDHATMTEVKS, LNFNMSVSSMEYIPEGEILVITYGRSIAFHSAV, EAPA…ESYK, and GHFGPIHCVRFSPDGELYASGSEDGTLRLWQTVVGKTYGL. 3 positions are modified to phosphoserine: Ser312, Ser335, and Ser338.

The protein belongs to the WD repeat STRAP family. Part of the core SMN complex that contains SMN1, GEMIN2/SIP1, DDX20/GEMIN3, GEMIN4, GEMIN5, GEMIN6, GEMIN7, GEMIN8 and STRAP/UNRIP. Part of the SMN-Sm complex that contains SMN1, GEMIN2/SIP1, DDX20/GEMIN3, GEMIN4, GEMIN5, GEMIN6, GEMIN7, GEMIN8, STRAP/UNRIP and the Sm proteins SNRPB, SNRPD1, SNRPD2, SNRPD3, SNRPE, SNRPF and SNRPG. Associates with the SMN complex in the cytoplasm but not in the nucleus. Interacts with GEMIN6; the interaction is direct. Interacts with GEMIN7; the interaction is direct. Interacts with CSDE1/UNR and MAWBP. Interacts with PDPK1. Interacts with TRIM48.

The protein resides in the cytoplasm. It localises to the nucleus. Functionally, the SMN complex catalyzes the assembly of small nuclear ribonucleoproteins (snRNPs), the building blocks of the spliceosome, and thereby plays an important role in the splicing of cellular pre-mRNAs. Most spliceosomal snRNPs contain a common set of Sm proteins SNRPB, SNRPD1, SNRPD2, SNRPD3, SNRPE, SNRPF and SNRPG that assemble in a heptameric protein ring on the Sm site of the small nuclear RNA to form the core snRNP (Sm core). In the cytosol, the Sm proteins SNRPD1, SNRPD2, SNRPE, SNRPF and SNRPG are trapped in an inactive 6S pICln-Sm complex by the chaperone CLNS1A that controls the assembly of the core snRNP. To assemble core snRNPs, the SMN complex accepts the trapped 5Sm proteins from CLNS1A forming an intermediate. Binding of snRNA inside 5Sm triggers eviction of the SMN complex, thereby allowing binding of SNRPD3 and SNRPB to complete assembly of the core snRNP. STRAP plays a role in the cellular distribution of the SMN complex. Negatively regulates TGF-beta signaling but positively regulates the PDPK1 kinase activity by enhancing its autophosphorylation and by significantly reducing the association of PDPK1 with 14-3-3 protein. In Homo sapiens (Human), this protein is Serine-threonine kinase receptor-associated protein (STRAP).